A 981-amino-acid polypeptide reads, in one-letter code: Beta-glucuronidase (981 aa).

Glu500 functions as the Nucleophile in the catalytic mechanism. Mg(2+) is bound by residues Asn561, Trp562, Ile563, Ser581, and Glu583.

It belongs to the glycosyl hydrolase 2 family.

The protein localises to the periplasm. The enzyme catalyses a beta-D-glucuronoside + H2O = D-glucuronate + an alcohol. Functionally, beta-glucuronidase involved in ulvan degradation. Ulvan is the main polysaccharide component of the Ulvales (green seaweed) cell wall. It is composed of disaccharide building blocks comprising 3-sulfated rhamnose (Rha3S) linked to D-glucuronic acid (GlcA), L-iduronic acid (IduA), or D-xylose (Xyl). Beta-glucuronidase removes GlcA side chains present on some O2 residues of Rha3S. Can remove the GlcA side chains from polymeric ulvan or from smaller oligomers. The protein is Beta-glucuronidase of Formosa agariphila (strain DSM 15362 / KCTC 12365 / LMG 23005 / KMM 3901 / M-2Alg 35-1).